A 688-amino-acid chain; its full sequence is Eukaryotic translation initiation factor 3 subunit B (688 aa).

The interval 1–32 is disordered; it reads MAKKKGENYDSDGGDDQDYDEEPNFDDPEGFV. A compositionally biased stretch (acidic residues) spans 9-32; that stretch reads YDSDGGDDQDYDEEPNFDDPEGFV. Positions 57–141 constitute an RRM domain; sequence NVIVVDNIPV…HTLLVNLFSD (85 aa). 6 WD repeats span residues 208–246, 247–287, 291–329, 332–367, 440–482, and 527–572; these read RDRFTETYVKWSPLGTYIVTFHKQGVVIWGGSNFTKINK, FPHS…EKRS, DGTSNMSMFRWSHDDKYVARMGDNAIHVYETSTFYLLDK, IKVQGIRNFSWSPTDNIIAYWMSEDLEAPARVTLLE, EVKE…EPTM, and GDHF…KRVN. Residues 613 to 642 adopt a coiled-coil conformation; that stretch reads RIRMTRASKELLEKRAKLREQFVEYRTKRV.

Belongs to the eIF-3 subunit B family. Component of the eukaryotic translation initiation factor 3 (eIF-3) complex.

Its subcellular location is the cytoplasm. In terms of biological role, RNA-binding component of the eukaryotic translation initiation factor 3 (eIF-3) complex, which is involved in protein synthesis of a specialized repertoire of mRNAs and, together with other initiation factors, stimulates binding of mRNA and methionyl-tRNAi to the 40S ribosome. The eIF-3 complex specifically targets and initiates translation of a subset of mRNAs involved in cell proliferation. The chain is Eukaryotic translation initiation factor 3 subunit B from Aedes aegypti (Yellowfever mosquito).